The chain runs to 186 residues: Probable chorismate pyruvate-lyase (186 aa).

R78, L116, and E175 together coordinate substrate.

This sequence belongs to the UbiC family.

It is found in the cytoplasm. The enzyme catalyses chorismate = 4-hydroxybenzoate + pyruvate. Its pathway is cofactor biosynthesis; ubiquinone biosynthesis. Functionally, removes the pyruvyl group from chorismate, with concomitant aromatization of the ring, to provide 4-hydroxybenzoate (4HB) for the ubiquinone pathway. In Psychromonas ingrahamii (strain DSM 17664 / CCUG 51855 / 37), this protein is Probable chorismate pyruvate-lyase.